Reading from the N-terminus, the 546-residue chain is Chaperonin GroEL 6 (546 aa).

Residues 30 to 33 (TLGP), K51, 87 to 91 (DGTTT), G415, and D496 contribute to the ATP site.

It belongs to the chaperonin (HSP60) family. Forms a cylinder of 14 subunits composed of two heptameric rings stacked back-to-back. Interacts with the co-chaperonin GroES.

It localises to the cytoplasm. The enzyme catalyses ATP + H2O + a folded polypeptide = ADP + phosphate + an unfolded polypeptide.. Functionally, together with its co-chaperonin GroES, plays an essential role in assisting protein folding. The GroEL-GroES system forms a nano-cage that allows encapsulation of the non-native substrate proteins and provides a physical environment optimized to promote and accelerate protein folding. The protein is Chaperonin GroEL 6 of Bradyrhizobium diazoefficiens (strain JCM 10833 / BCRC 13528 / IAM 13628 / NBRC 14792 / USDA 110).